The chain runs to 260 residues: Lysozyme D (260 aa).

Positions 1–19 (MRLLVTLILLIFVLTVSGQ) are cleaved as a signal peptide. The segment at 83–148 (GSTTTGGTGS…SGGSSGSGSG (66 aa)) is disordered. 2 stretches are compositionally biased toward gly residues: residues 101-119 (SGSG…GSGT) and 129-147 (SGSG…GSGS).

This sequence belongs to the dictyostelium lysozyme family. Contains disulfide bonds.

It localises to the cytoplasmic vesicle lumen. It catalyses the reaction Hydrolysis of (1-&gt;4)-beta-linkages between N-acetylmuramic acid and N-acetyl-D-glucosamine residues in a peptidoglycan and between N-acetyl-D-glucosamine residues in chitodextrins.. Has antibacterial activity. This Dictyostelium discoideum (Social amoeba) protein is Lysozyme D (alyD-1).